The sequence spans 181 residues: uncharacterized protein (181 aa).

4 helical membrane passes run 3–23 (LSQT…VLIL), 67–87 (ALLL…GLSV), 92–112 (VLGV…VLFI), and 159–179 (MFIL…LWII).

This sequence belongs to the YggT family.

Its subcellular location is the cell membrane. This is an uncharacterized protein from Haemophilus influenzae (strain ATCC 51907 / DSM 11121 / KW20 / Rd).